We begin with the raw amino-acid sequence, 273 residues long: 3-methyl-2-oxobutanoate hydroxymethyltransferase (273 aa).

Mg(2+) is bound by residues Asp-53 and Asp-92. 3-methyl-2-oxobutanoate is bound by residues 53–54 (DS), Asp-92, and Lys-122. Mg(2+) is bound at residue Glu-124. The active-site Proton acceptor is Glu-191.

Belongs to the PanB family. As to quaternary structure, homodecamer; pentamer of dimers. Requires Mg(2+) as cofactor.

The protein localises to the cytoplasm. The catalysed reaction is 3-methyl-2-oxobutanoate + (6R)-5,10-methylene-5,6,7,8-tetrahydrofolate + H2O = 2-dehydropantoate + (6S)-5,6,7,8-tetrahydrofolate. It functions in the pathway cofactor biosynthesis; (R)-pantothenate biosynthesis; (R)-pantoate from 3-methyl-2-oxobutanoate: step 1/2. Functionally, catalyzes the reversible reaction in which hydroxymethyl group from 5,10-methylenetetrahydrofolate is transferred onto alpha-ketoisovalerate to form ketopantoate. This is 3-methyl-2-oxobutanoate hydroxymethyltransferase from Bacteroides thetaiotaomicron (strain ATCC 29148 / DSM 2079 / JCM 5827 / CCUG 10774 / NCTC 10582 / VPI-5482 / E50).